The sequence spans 330 residues: Ferrochelatase (330 aa).

Positions 200 and 281 each coordinate Fe cation.

The protein belongs to the ferrochelatase family.

Its subcellular location is the cytoplasm. The catalysed reaction is heme b + 2 H(+) = protoporphyrin IX + Fe(2+). Its pathway is porphyrin-containing compound metabolism; protoheme biosynthesis; protoheme from protoporphyrin-IX: step 1/1. Its function is as follows. Catalyzes the ferrous insertion into protoporphyrin IX. This Marinomonas sp. (strain MWYL1) protein is Ferrochelatase.